The primary structure comprises 381 residues: MKYALINCVIYTKYDVLRDFAVIINGEIIEAVIPQAELETGIKTIDLQGNNLTAGFIDLQLNGCGGVMFNDQTSVETLEIMQETNLKSGCTSFLPTFITAPDENIKSAVKIMREYLNKHKNQALGLHIEGPYLSIEKKGVHRPEYIREITPEMKDFLCENGDVITKMTIAAENPTINYTPDFVKAGIIVSVGHSNATYEVAKAAFHKGATFATHLHNAMSPISSGREMGVVGAVLDSDVYTGIIVDGVHINYGNVRIDKKIKGDKLCIVTDSIAAAGAPPELESFTFVGKTIYIKEGRCYDANDTIAGASITMMESIKNAVEYVEIPLAEAIRMSNLYPARAIGIDDRLGSVEKGKIANLAVFTPNYQVIGTVVNGKWKEN.

Glutamate 129 contacts a divalent metal cation. 140-141 (VH) provides a ligand contact to substrate. Residues histidine 193 and histidine 214 each contribute to the a divalent metal cation site. Substrate-binding positions include 217–218 (NA), arginine 226, and 246–249 (DGVH). The active-site Proton donor/acceptor is the aspartate 271. Substrate is bound at residue 306–308 (IAG).

Belongs to the metallo-dependent hydrolases superfamily. NagA family. Homotetramer. The cofactor is a divalent metal cation.

It catalyses the reaction N-acetyl-D-glucosamine 6-phosphate + H2O = D-glucosamine 6-phosphate + acetate. It functions in the pathway amino-sugar metabolism; N-acetylneuraminate degradation; D-fructose 6-phosphate from N-acetylneuraminate: step 4/5. Involved in the first committed step in the biosynthesis of amino-sugar-nucleotides. Catalyzes the hydrolysis of the N-acetyl group of N-acetylglucosamine-6-phosphate (GlcNAc-6-P) to yield glucosamine 6-phosphate and acetate. The chain is N-acetylglucosamine-6-phosphate deacetylase (nagA) from Haemophilus influenzae (strain ATCC 51907 / DSM 11121 / KW20 / Rd).